The primary structure comprises 245 residues: Glycerophosphodiester phosphodiesterase (245 aa).

One can recognise a GP-PDE domain in the interval 2–241 (TKIFAHRGFK…DFPDRAVKIR (240 aa)). His-7 serves as the catalytic Proton acceptor. Positions 34 and 36 each coordinate a divalent metal cation. His-49 functions as the Proton donor in the catalytic mechanism. Residue Glu-110 coordinates a divalent metal cation.

This sequence belongs to the glycerophosphoryl diester phosphodiesterase family. Requires Ni(2+) as cofactor. Co(2+) is required as a cofactor. Mn(2+) serves as cofactor.

It carries out the reaction a sn-glycero-3-phosphodiester + H2O = an alcohol + sn-glycerol 3-phosphate + H(+). With respect to regulation, inhibited by EDTA and various organic solvents such as chloroform, toluene or benzene. Its function is as follows. Glycerophosphodiester phosphodiesterase hydrolyzes glycerophosphodiesters into glycerol-3-phosphate (G3P) and the corresponding alcohol. Can hydrolyze the model substrate bis-(p-nitrophenyl phosphate) (bis(pNPP)) to p-nitrophenol. Can also catalyze the degradation of diphenyl phosphate (DPHP) to phenyl phosphate (PHP). DPHP is an aryl phosphate ester used as a chemical additive and an industrial catalyst that can easily spread to the environment and exhibits toxicity toward organisms. The sequence is that of Glycerophosphodiester phosphodiesterase from Bacillus altitudinis.